A 322-amino-acid polypeptide reads, in one-letter code: Protein-L-isoaspartate O-methyltransferase (322 aa).

Residues 1–101 (MSGERAKRFP…AKQGDRSAAP (101 aa)) are disordered. Over residues 14-29 (EDLKREPRKPEGRVAE) the composition is skewed to basic and acidic residues. Low complexity-rich tracts occupy residues 33-51 (AGDA…PAAA) and 76-91 (HAPA…PQGG). S170 is an active-site residue.

The protein belongs to the methyltransferase superfamily. L-isoaspartyl/D-aspartyl protein methyltransferase family.

It is found in the cytoplasm. It carries out the reaction [protein]-L-isoaspartate + S-adenosyl-L-methionine = [protein]-L-isoaspartate alpha-methyl ester + S-adenosyl-L-homocysteine. Its function is as follows. Catalyzes the methyl esterification of L-isoaspartyl residues in peptides and proteins that result from spontaneous decomposition of normal L-aspartyl and L-asparaginyl residues. It plays a role in the repair and/or degradation of damaged proteins. The chain is Protein-L-isoaspartate O-methyltransferase from Burkholderia pseudomallei (strain 1106a).